We begin with the raw amino-acid sequence, 576 residues long: Lysine--tRNA ligase (576 aa).

Glu413 and Glu420 together coordinate Mg(2+).

This sequence belongs to the class-II aminoacyl-tRNA synthetase family. In terms of assembly, homodimer. Requires Mg(2+) as cofactor.

It is found in the cytoplasm. It carries out the reaction tRNA(Lys) + L-lysine + ATP = L-lysyl-tRNA(Lys) + AMP + diphosphate. In Bacteroides thetaiotaomicron (strain ATCC 29148 / DSM 2079 / JCM 5827 / CCUG 10774 / NCTC 10582 / VPI-5482 / E50), this protein is Lysine--tRNA ligase.